The chain runs to 347 residues: N-acetyl-gamma-glutamyl-phosphate reductase (347 aa).

Cysteine 152 is an active-site residue.

The protein belongs to the NAGSA dehydrogenase family. Type 1 subfamily.

Its subcellular location is the cytoplasm. It catalyses the reaction N-acetyl-L-glutamate 5-semialdehyde + phosphate + NADP(+) = N-acetyl-L-glutamyl 5-phosphate + NADPH + H(+). Its pathway is amino-acid biosynthesis; L-arginine biosynthesis; N(2)-acetyl-L-ornithine from L-glutamate: step 3/4. In terms of biological role, catalyzes the NADPH-dependent reduction of N-acetyl-5-glutamyl phosphate to yield N-acetyl-L-glutamate 5-semialdehyde. This chain is N-acetyl-gamma-glutamyl-phosphate reductase, found in Neisseria meningitidis serogroup C (strain 053442).